The following is a 336-amino-acid chain: DNA-directed RNA polymerase subunit alpha (336 aa).

The tract at residues 1–234 (MIEFVIPKKL…NHFKIVTEGL (234 aa)) is alpha N-terminal domain (alpha-NTD). Residues 269–336 (VYNRKIDELE…KFGLELRKGE (68 aa)) are alpha C-terminal domain (alpha-CTD).

The protein belongs to the RNA polymerase alpha chain family. Homodimer. The RNAP catalytic core consists of 2 alpha, 1 beta, 1 beta' and 1 omega subunit. When a sigma factor is associated with the core the holoenzyme is formed, which can initiate transcription.

It catalyses the reaction RNA(n) + a ribonucleoside 5'-triphosphate = RNA(n+1) + diphosphate. DNA-dependent RNA polymerase catalyzes the transcription of DNA into RNA using the four ribonucleoside triphosphates as substrates. This Thermotoga petrophila (strain ATCC BAA-488 / DSM 13995 / JCM 10881 / RKU-1) protein is DNA-directed RNA polymerase subunit alpha.